We begin with the raw amino-acid sequence, 264 residues long: Apolipoprotein A-I (264 aa).

The signal sequence occupies residues 1–18 (MKAVVLAVAVLFLTGSQA). A run of 2 repeats spans residues 67 to 88 (LKLV…EQLG) and 89 to 110 (PVTQ…EEMN). The tract at residues 67–264 (LKLVDNWDTV…DETSKRLSTQ (198 aa)) is 10 X approximate tandem repeats. At M109 the chain carries Methionine sulfoxide. The stretch at 111 to 121 (KDLEEVKKQVQ) is one 3; half-length repeat. 3 tandem repeats follow at residues 122 to 143 (PYLD…QKVG), 144 to 165 (PLGA…ERLV), and 166 to 187 (PVGE…SNLS). A 7; truncated repeat occupies 188–207 (PYSDKMRERLAQHLAKLKDS). Position 193 is a methionine sulfoxide (M193). Repeat unit 8 spans residues 208 to 229 (TTLAEYRTKASNHLQTLSEKAK). The 9; half-length repeat unit spans residues 230 to 240 (PALEDLRQGLT). Repeat 10 spans residues 241-264 (PMLESFRATIMGWIDETSKRLSTQ). M242 carries the methionine sulfoxide modification.

The protein belongs to the apolipoprotein A1/A4/E family. Homodimer. Interacts with APOA1BP and CLU. Component of a sperm activating protein complex (SPAP), consisting of APOA1, an immunoglobulin heavy chain, an immunoglobulin light chain and albumin. Interacts with NDRG1. Interacts with SCGB3A2. Interacts with NAXE and YJEFN3. Post-translationally, glycosylated. In terms of processing, palmitoylated. Phosphorylation sites are present in the extracellular medium.

It localises to the secreted. In terms of biological role, participates in the reverse transport of cholesterol from tissues to the liver for excretion by promoting cholesterol efflux from tissues and by acting as a cofactor for the lecithin cholesterol acyltransferase (LCAT). As part of the SPAP complex, activates spermatozoa motility. In Peromyscus maniculatus bairdii (Prairie deer mouse), this protein is Apolipoprotein A-I (Apoa1).